Here is a 607-residue protein sequence, read N- to C-terminus: UvrABC system protein C (607 aa).

One can recognise a GIY-YIG domain in the interval glycine 16–isoleucine 94. In terms of domain architecture, UVR spans asparagine 203 to valine 238.

It belongs to the UvrC family. As to quaternary structure, interacts with UvrB in an incision complex.

It is found in the cytoplasm. Functionally, the UvrABC repair system catalyzes the recognition and processing of DNA lesions. UvrC both incises the 5' and 3' sides of the lesion. The N-terminal half is responsible for the 3' incision and the C-terminal half is responsible for the 5' incision. In Pseudomonas syringae pv. syringae (strain B728a), this protein is UvrABC system protein C.